The sequence spans 885 residues: Eukaryotic translation initiation factor 3 subunit C (885 aa).

The interval 1-81 (MSFFAKLQGS…SDSDDERQAV (81 aa)) is disordered. Residues 9-28 (GSDSESSSGSESEESILSGS) are compositionally biased toward low complexity. Positions 55-76 (EESESEEESSDEDEEEMSDSDD) are enriched in acidic residues. Positions 624-797 (FHMHLNVELL…GVVIFHRVEQ (174 aa)) constitute a PCI domain. The tract at residues 822 to 885 (LDVKLGNQGQ…TTMGRRVTAQ (64 aa)) is disordered. Gly residues predominate over residues 855–872 (RGTYRGRGGRGGRGGFNQ).

This sequence belongs to the eIF-3 subunit C family. As to quaternary structure, component of the eukaryotic translation initiation factor 3 (eIF-3) complex.

The protein resides in the cytoplasm. In terms of biological role, component of the eukaryotic translation initiation factor 3 (eIF-3) complex, which is involved in protein synthesis of a specialized repertoire of mRNAs and, together with other initiation factors, stimulates binding of mRNA and methionyl-tRNAi to the 40S ribosome. The eIF-3 complex specifically targets and initiates translation of a subset of mRNAs involved in cell proliferation. The chain is Eukaryotic translation initiation factor 3 subunit C from Cryptococcus neoformans var. neoformans serotype D (strain B-3501A) (Filobasidiella neoformans).